Here is a 168-residue protein sequence, read N- to C-terminus: Protein GRE1 (168 aa).

Positions 1–168 are disordered; sequence MSNLLNKFAD…DDDSGNQGVW (168 aa). 2 stretches are compositionally biased toward basic and acidic residues: residues 8–20 and 27–43; these read FADKLHGNDHDER and DQTRQQRHEKHQQREFR. Composition is skewed to polar residues over residues 56-81 and 120-144; these read NQGNFPQRQQPQSNLGGNTQFGGNDF and TSGQQQKQGRTRGAQSNRYQSSNIG.

Its subcellular location is the cytoplasm. In Saccharomyces cerevisiae (strain ATCC 204508 / S288c) (Baker's yeast), this protein is Protein GRE1 (GRE1).